The following is a 198-amino-acid chain: MPTLGVKGARERDKNSASGAGAGAGAGAGAGEKHRKGPRTTDPPKTGWALTKQRLVALSPTLRQRHLLFGDFLDDIGKVASMFPRESVELPYDMPDPRTWSQALNLPSEHQNRFLGLIKAAEARGRVHTLRLRYTRMRAEEISLLIQKQSSARAAIRLELFLPPQLKPTKIPDPLDRHERRRVETILEEEVDGNIFPR.

Residues 1 to 47 (MPTLGVKGARERDKNSASGAGAGAGAGAGAGEKHRKGPRTTDPPKTG) form a disordered region. The segment covering 20 to 30 (AGAGAGAGAGA) has biased composition (gly residues).

The polypeptide is Protein LKAAEAR1 (Lkaaear1) (Mus musculus (Mouse)).